A 680-amino-acid polypeptide reads, in one-letter code: Zinc finger protein OBI1 (680 aa).

The KRAB domain occupies 16-87 (VSFEDVAVDF…AEATEQCLPG (72 aa)). Residues 263–280 (CHKIFPNKTELSNHDAMH) form a C2H2-type 1; degenerate zinc finger. C2H2-type zinc fingers lie at residues 455–477 (FRCN…QRMH), 483–505 (HECK…QGIH), 511–533 (YECN…ERTH), 539–561 (FECK…QKIH), 567–589 (HKCK…QKTH), 595–617 (YECK…ETTH), 623–645 (YECK…QVIH), and 651–673 (FECK…QKIH).

Post-translationally, polyubiquitinated, leading to its degradation via the ubiquitin-proteasome pathway. Expressed during osteogenic differentiation where levels increase from the first days of differentiation and remain high during the whole process. Highly expressed in lung.

The protein resides in the nucleus. Its function is as follows. May modulate osteogenic differentiation, at least in part, through the bone morphogenetic protein (BMP) signaling pathway, increasing RUNX2 activation and leading to osteoblast commitment and maturation. This chain is Zinc finger protein OBI1 (ObI1), found in Mus musculus (Mouse).